Reading from the N-terminus, the 918-residue chain is Protein translocase subunit SecA (918 aa).

ATP-binding positions include glutamine 87, 105–109, and aspartate 494; that span reads GEGKT. Positions 863-883 are enriched in basic and acidic residues; that stretch reads KQDDTSPKEYKKIGQEQRAEV. Residues 863–918 are disordered; it reads KQDDTSPKEYKKIGQEQRAEVDMFGNELKSNKTKPQVSSTTSSGGGSERRSSRRKK.

Belongs to the SecA family. In terms of assembly, monomer and homodimer. Part of the essential Sec protein translocation apparatus which comprises SecA, SecYEG and auxiliary proteins SecDF. Other proteins may also be involved.

The protein localises to the cell inner membrane. The protein resides in the cytoplasm. The catalysed reaction is ATP + H2O + cellular proteinSide 1 = ADP + phosphate + cellular proteinSide 2.. Functionally, part of the Sec protein translocase complex. Interacts with the SecYEG preprotein conducting channel. Has a central role in coupling the hydrolysis of ATP to the transfer of proteins into and across the cell membrane, serving as an ATP-driven molecular motor driving the stepwise translocation of polypeptide chains across the membrane. The protein is Protein translocase subunit SecA of Leptospira biflexa serovar Patoc (strain Patoc 1 / Ames).